The sequence spans 125 residues: MSKMDGLSTGEEEDSTFTSISLEDDTDHSLKSWRSRAESLLPKMMNADMDAVDAENQVELEEKTRLINQVLELQHTLEDLSARVDAVKEENLKLKSENQVLGQYIENLMSASSVFQTTDTKSKRK.

Residues 1–31 form a disordered region; sequence MSKMDGLSTGEEEDSTFTSISLEDDTDHSLK. Residues 43-101 are a coiled coil; it reads KMMNADMDAVDAENQVELEEKTRLINQVLELQHTLEDLSARVDAVKEENLKLKSENQVL.

This sequence belongs to the SCOC family. Homodimer. Interacts with ARL1, ARL2 and ARL3. Directly interacts with FEZ1 and UVRAG. The interaction with UVRAG is reduced by amino acid starvation, but the complex is stabilized in the presence of FEZ1. Interacts with NRBF2.

The protein localises to the golgi apparatus membrane. Its subcellular location is the golgi apparatus. It localises to the trans-Golgi network. The protein resides in the cytoplasm. It is found in the cytosol. Positive regulator of amino acid starvation-induced autophagy. This Mus musculus (Mouse) protein is Short coiled-coil protein (Scoc).